Consider the following 257-residue polypeptide: Acyl-[acyl-carrier-protein]--UDP-N-acetylglucosamine O-acyltransferase (257 aa).

Belongs to the transferase hexapeptide repeat family. LpxA subfamily. In terms of assembly, homotrimer.

It localises to the cytoplasm. The catalysed reaction is a (3R)-hydroxyacyl-[ACP] + UDP-N-acetyl-alpha-D-glucosamine = a UDP-3-O-[(3R)-3-hydroxyacyl]-N-acetyl-alpha-D-glucosamine + holo-[ACP]. It participates in glycolipid biosynthesis; lipid IV(A) biosynthesis; lipid IV(A) from (3R)-3-hydroxytetradecanoyl-[acyl-carrier-protein] and UDP-N-acetyl-alpha-D-glucosamine: step 1/6. Its function is as follows. Involved in the biosynthesis of lipid A, a phosphorylated glycolipid that anchors the lipopolysaccharide to the outer membrane of the cell. The chain is Acyl-[acyl-carrier-protein]--UDP-N-acetylglucosamine O-acyltransferase from Anaeromyxobacter sp. (strain K).